Reading from the N-terminus, the 179-residue chain is Large ribosomal subunit protein uL5 (179 aa).

It belongs to the universal ribosomal protein uL5 family. Part of the 50S ribosomal subunit; part of the 5S rRNA/L5/L18/L25 subcomplex. Contacts the 5S rRNA and the P site tRNA. Forms a bridge to the 30S subunit in the 70S ribosome.

In terms of biological role, this is one of the proteins that bind and probably mediate the attachment of the 5S RNA into the large ribosomal subunit, where it forms part of the central protuberance. In the 70S ribosome it contacts protein S13 of the 30S subunit (bridge B1b), connecting the 2 subunits; this bridge is implicated in subunit movement. Contacts the P site tRNA; the 5S rRNA and some of its associated proteins might help stabilize positioning of ribosome-bound tRNAs. The sequence is that of Large ribosomal subunit protein uL5 from Shouchella clausii (strain KSM-K16) (Alkalihalobacillus clausii).